Here is a 373-residue protein sequence, read N- to C-terminus: Glutamate 5-kinase (373 aa).

Lys-12 contributes to the ATP binding site. Substrate-binding residues include Ser-52, Asp-139, and Asn-154. 216-222 lines the ATP pocket; it reads TGGMVTK. A PUA domain is found at 281-359; the sequence is RGNICIDDGA…DEINTVLAGN (79 aa).

This sequence belongs to the glutamate 5-kinase family.

It localises to the cytoplasm. The enzyme catalyses L-glutamate + ATP = L-glutamyl 5-phosphate + ADP. Its pathway is amino-acid biosynthesis; L-proline biosynthesis; L-glutamate 5-semialdehyde from L-glutamate: step 1/2. In terms of biological role, catalyzes the transfer of a phosphate group to glutamate to form L-glutamate 5-phosphate. This is Glutamate 5-kinase from Dehalococcoides mccartyi (strain ATCC BAA-2266 / KCTC 15142 / 195) (Dehalococcoides ethenogenes (strain 195)).